We begin with the raw amino-acid sequence, 431 residues long: Serine hydroxymethyltransferase 3 (431 aa).

Residues Leu-131 and 135–137 (GHL) each bind (6S)-5,6,7,8-tetrahydrofolate. At Lys-240 the chain carries N6-(pyridoxal phosphate)lysine.

It belongs to the SHMT family. In terms of assembly, homodimer. The cofactor is pyridoxal 5'-phosphate.

It is found in the cytoplasm. It catalyses the reaction (6R)-5,10-methylene-5,6,7,8-tetrahydrofolate + glycine + H2O = (6S)-5,6,7,8-tetrahydrofolate + L-serine. The protein operates within one-carbon metabolism; tetrahydrofolate interconversion. It functions in the pathway amino-acid biosynthesis; glycine biosynthesis; glycine from L-serine: step 1/1. Functionally, catalyzes the reversible interconversion of serine and glycine with tetrahydrofolate (THF) serving as the one-carbon carrier. This reaction serves as the major source of one-carbon groups required for the biosynthesis of purines, thymidylate, methionine, and other important biomolecules. Also exhibits THF-independent aldolase activity toward beta-hydroxyamino acids, producing glycine and aldehydes, via a retro-aldol mechanism. This chain is Serine hydroxymethyltransferase 3, found in Colwellia psychrerythraea (strain 34H / ATCC BAA-681) (Vibrio psychroerythus).